The chain runs to 383 residues: MNPTLALTEDLIRRRSVTPADEGCQAILETRLKAIGFDCEALVSGPDDFRVTNLWAVKRGTQGKDGKLLVFAGHTDVVPTGPLEQWHSDPFAPTHRDGKLYGRGAADMKTSIAGFVVAVEEFVKAHPAHAGSIGFLITSDEEGPAHDGTIKVVEALSARGERLDYCVIGEPTSVNALGDMVKNGRRGSLSGKLTVKGIQCHIAYPHLGRNPIHDAAPALAELAAEVWDAGNEYFPPTSWQMSNIHGGTGATNVIPGHVTIDFNFRFSTASTPEGLKARVHAILDRHSLDYTLDWTLGGEPFLTPRGELSEALSSAIKAETGFDTELSTTGGTSDGRFIARICPQVIEFGPPNASIHKIDEHVEVRFIEPLKNVYRGVLERLIA.

His-74 is a binding site for Zn(2+). Asp-76 is an active-site residue. Asp-107 serves as a coordination point for Zn(2+). Glu-141 acts as the Proton acceptor in catalysis. Positions 142, 170, and 356 each coordinate Zn(2+).

This sequence belongs to the peptidase M20A family. DapE subfamily. Homodimer. Zn(2+) is required as a cofactor. The cofactor is Co(2+).

The catalysed reaction is N-succinyl-(2S,6S)-2,6-diaminopimelate + H2O = (2S,6S)-2,6-diaminopimelate + succinate. Its pathway is amino-acid biosynthesis; L-lysine biosynthesis via DAP pathway; LL-2,6-diaminopimelate from (S)-tetrahydrodipicolinate (succinylase route): step 3/3. Its function is as follows. Catalyzes the hydrolysis of N-succinyl-L,L-diaminopimelic acid (SDAP), forming succinate and LL-2,6-diaminopimelate (DAP), an intermediate involved in the bacterial biosynthesis of lysine and meso-diaminopimelic acid, an essential component of bacterial cell walls. The sequence is that of Succinyl-diaminopimelate desuccinylase from Cupriavidus taiwanensis (strain DSM 17343 / BCRC 17206 / CCUG 44338 / CIP 107171 / LMG 19424 / R1) (Ralstonia taiwanensis (strain LMG 19424)).